The sequence spans 119 residues: Small ribosomal subunit protein uS13 (119 aa).

Residues 92–119 form a disordered region; it reads RRGLPVRGQRTKTNARTRKGPRKAIRAR.

Belongs to the universal ribosomal protein uS13 family. As to quaternary structure, part of the 30S ribosomal subunit. Forms a loose heterodimer with protein S19. Forms two bridges to the 50S subunit in the 70S ribosome.

In terms of biological role, located at the top of the head of the 30S subunit, it contacts several helices of the 16S rRNA. In the 70S ribosome it contacts the 23S rRNA (bridge B1a) and protein L5 of the 50S subunit (bridge B1b), connecting the 2 subunits; these bridges are implicated in subunit movement. Contacts the tRNAs in the A and P-sites. The polypeptide is Small ribosomal subunit protein uS13 (Nitrosomonas eutropha (strain DSM 101675 / C91 / Nm57)).